We begin with the raw amino-acid sequence, 913 residues long: DNA mismatch repair protein MutS (913 aa).

Positions 18-50 (NNKQKEKTKIPEDLSLEDLKKESQKRPRQRKNS) are disordered. Over residues 19 to 42 (NKQKEKTKIPEDLSLEDLKKESQK) the composition is skewed to basic and acidic residues. 720–727 (GPNASGKS) provides a ligand contact to ATP.

This sequence belongs to the DNA mismatch repair MutS family.

This protein is involved in the repair of mismatches in DNA. It is possible that it carries out the mismatch recognition step. This protein has a weak ATPase activity. The polypeptide is DNA mismatch repair protein MutS (Prochlorococcus marinus (strain MIT 9301)).